The primary structure comprises 157 residues: UPF0262 protein RL0614 (157 aa).

This sequence belongs to the UPF0262 family.

In Rhizobium johnstonii (strain DSM 114642 / LMG 32736 / 3841) (Rhizobium leguminosarum bv. viciae), this protein is UPF0262 protein RL0614.